Reading from the N-terminus, the 249-residue chain is 2,3-bisphosphoglycerate-dependent phosphoglycerate mutase (249 aa).

Substrate contacts are provided by residues 9-16, 22-23, arginine 61, 88-91, lysine 99, 115-116, and 184-185; these read RHGQSQWN, TG, ERHY, RR, and GN. The Tele-phosphohistidine intermediate role is filled by histidine 10. The active-site Proton donor/acceptor is glutamate 88.

This sequence belongs to the phosphoglycerate mutase family. BPG-dependent PGAM subfamily. Homodimer.

It carries out the reaction (2R)-2-phosphoglycerate = (2R)-3-phosphoglycerate. It participates in carbohydrate degradation; glycolysis; pyruvate from D-glyceraldehyde 3-phosphate: step 3/5. Functionally, catalyzes the interconversion of 2-phosphoglycerate and 3-phosphoglycerate. The polypeptide is 2,3-bisphosphoglycerate-dependent phosphoglycerate mutase (Xanthomonas axonopodis pv. citri (strain 306)).